The sequence spans 305 residues: Protein FdhE homolog (305 aa).

This sequence belongs to the FdhE family.

It is found in the cytoplasm. Functionally, necessary for formate dehydrogenase activity. The chain is Protein FdhE homolog from Actinobacillus pleuropneumoniae serotype 7 (strain AP76).